A 405-amino-acid polypeptide reads, in one-letter code: NADH-quinone oxidoreductase subunit D (405 aa).

Belongs to the complex I 49 kDa subunit family. NDH-1 is composed of 14 different subunits. Subunits NuoB, C, D, E, F, and G constitute the peripheral sector of the complex.

It localises to the cell inner membrane. The catalysed reaction is a quinone + NADH + 5 H(+)(in) = a quinol + NAD(+) + 4 H(+)(out). In terms of biological role, NDH-1 shuttles electrons from NADH, via FMN and iron-sulfur (Fe-S) centers, to quinones in the respiratory chain. The immediate electron acceptor for the enzyme in this species is believed to be ubiquinone. Couples the redox reaction to proton translocation (for every two electrons transferred, four hydrogen ions are translocated across the cytoplasmic membrane), and thus conserves the redox energy in a proton gradient. The chain is NADH-quinone oxidoreductase subunit D from Sphingopyxis alaskensis (strain DSM 13593 / LMG 18877 / RB2256) (Sphingomonas alaskensis).